The following is a 938-amino-acid chain: Isoleucine--tRNA ligase (938 aa).

The short motif at 58–68 (PYANGSIHIGH) is the 'HIGH' region element. K183 bears the N6-acetyllysine mark. E561 lines the L-isoleucyl-5'-AMP pocket. Residues 602–606 (KMSKS) carry the 'KMSKS' region motif. Position 605 (K605) interacts with ATP. Zn(2+) contacts are provided by C901, C904, C921, and C924.

This sequence belongs to the class-I aminoacyl-tRNA synthetase family. IleS type 1 subfamily. Monomer. It depends on Zn(2+) as a cofactor.

The protein localises to the cytoplasm. The enzyme catalyses tRNA(Ile) + L-isoleucine + ATP = L-isoleucyl-tRNA(Ile) + AMP + diphosphate. In terms of biological role, catalyzes the attachment of isoleucine to tRNA(Ile). As IleRS can inadvertently accommodate and process structurally similar amino acids such as valine, to avoid such errors it has two additional distinct tRNA(Ile)-dependent editing activities. One activity is designated as 'pretransfer' editing and involves the hydrolysis of activated Val-AMP. The other activity is designated 'posttransfer' editing and involves deacylation of mischarged Val-tRNA(Ile). In Escherichia coli (strain ATCC 8739 / DSM 1576 / NBRC 3972 / NCIMB 8545 / WDCM 00012 / Crooks), this protein is Isoleucine--tRNA ligase.